Here is a 126-residue protein sequence, read N- to C-terminus: MFRTLLKSKIHRASVTHCELNYEGSCAIDEDLLDAANLGENEQVHIWNINNGERFITYAIRAERGSRIISVNGSAARRAAVGDLVIIAAFAQVHEEYVAGFRPKLVFVDPDNRIKEERSTIPVQMP.

The active-site Schiff-base intermediate with substrate; via pyruvic acid is the Ser-25. The residue at position 25 (Ser-25) is a Pyruvic acid (Ser). Thr-57 contacts substrate. Tyr-58 (proton donor) is an active-site residue. A substrate-binding site is contributed by 73-75; it reads GSA.

Belongs to the PanD family. Heterooctamer of four alpha and four beta subunits. The cofactor is pyruvate. Post-translationally, is synthesized initially as an inactive proenzyme, which is activated by self-cleavage at a specific serine bond to produce a beta-subunit with a hydroxyl group at its C-terminus and an alpha-subunit with a pyruvoyl group at its N-terminus.

It localises to the cytoplasm. It catalyses the reaction L-aspartate + H(+) = beta-alanine + CO2. It functions in the pathway cofactor biosynthesis; (R)-pantothenate biosynthesis; beta-alanine from L-aspartate: step 1/1. Functionally, catalyzes the pyruvoyl-dependent decarboxylation of aspartate to produce beta-alanine. The protein is Aspartate 1-decarboxylase 1 of Polaromonas sp. (strain JS666 / ATCC BAA-500).